We begin with the raw amino-acid sequence, 482 residues long: Variant surface glycoprotein ANTAT 1.1C (482 aa).

Positions 1–8 (LHPQQALA) are cleaved as a signal peptide. Cystine bridges form between Cys-24-Cys-151 and Cys-133-Cys-188. Asn-92 is a glycosylation site (N-linked (GlcNAc...) asparagine). N-linked (GlcNAc...) asparagine glycans are attached at residues Asn-398 and Asn-411. The GPI-anchor amidated aspartate moiety is linked to residue Asp-459. Positions 460 to 482 (SSILVTKKFALSLVSAAFASLLF) are cleaved as a propeptide — removed in mature form.

It localises to the cell membrane. VSG forms a coat on the surface of the parasite. The trypanosome evades the immune response of the host by expressing a series of antigenically distinct VSGs from an estimated 1000 VSG genes. The sequence is that of Variant surface glycoprotein ANTAT 1.1C from Trypanosoma brucei brucei.